We begin with the raw amino-acid sequence, 426 residues long: Serine--tRNA ligase (426 aa).

233–235 lines the L-serine pocket; the sequence is TSE. 264–266 lines the ATP pocket; it reads RSE. Residue Glu-287 coordinates L-serine. An ATP-binding site is contributed by 351 to 354; it reads EISS. Residue Ser-387 coordinates L-serine.

This sequence belongs to the class-II aminoacyl-tRNA synthetase family. Type-1 seryl-tRNA synthetase subfamily. In terms of assembly, homodimer. The tRNA molecule binds across the dimer.

It is found in the cytoplasm. The catalysed reaction is tRNA(Ser) + L-serine + ATP = L-seryl-tRNA(Ser) + AMP + diphosphate + H(+). The enzyme catalyses tRNA(Sec) + L-serine + ATP = L-seryl-tRNA(Sec) + AMP + diphosphate + H(+). It participates in aminoacyl-tRNA biosynthesis; selenocysteinyl-tRNA(Sec) biosynthesis; L-seryl-tRNA(Sec) from L-serine and tRNA(Sec): step 1/1. Functionally, catalyzes the attachment of serine to tRNA(Ser). Is also able to aminoacylate tRNA(Sec) with serine, to form the misacylated tRNA L-seryl-tRNA(Sec), which will be further converted into selenocysteinyl-tRNA(Sec). The chain is Serine--tRNA ligase from Xylella fastidiosa (strain M12).